The chain runs to 114 residues: Iron-sulfur cluster insertion protein ErpA (114 aa).

Positions 42, 106, and 108 each coordinate iron-sulfur cluster.

It belongs to the HesB/IscA family. In terms of assembly, homodimer. Iron-sulfur cluster serves as cofactor.

Required for insertion of 4Fe-4S clusters for at least IspG. This is Iron-sulfur cluster insertion protein ErpA from Pseudoalteromonas atlantica (strain T6c / ATCC BAA-1087).